The primary structure comprises 131 residues: Small ribosomal subunit protein uS8 (131 aa).

Belongs to the universal ribosomal protein uS8 family. As to quaternary structure, part of the 30S ribosomal subunit. Contacts proteins S5 and S12.

One of the primary rRNA binding proteins, it binds directly to 16S rRNA central domain where it helps coordinate assembly of the platform of the 30S subunit. The sequence is that of Small ribosomal subunit protein uS8 from Mycoplasmopsis agalactiae (strain NCTC 10123 / CIP 59.7 / PG2) (Mycoplasma agalactiae).